A 501-amino-acid chain; its full sequence is 25-hydroxyvitamin D-1 alpha hydroxylase, mitochondrial (501 aa).

Cys448 lines the heme pocket.

It belongs to the cytochrome P450 family. Heme is required as a cofactor. As to expression, kidney.

Its subcellular location is the mitochondrion membrane. It catalyses the reaction calcidiol + 2 reduced [adrenodoxin] + O2 + 2 H(+) = calcitriol + 2 oxidized [adrenodoxin] + H2O. It carries out the reaction secalciferol + 2 reduced [adrenodoxin] + O2 + 2 H(+) = calcitetrol + 2 oxidized [adrenodoxin] + H2O. It participates in hormone biosynthesis; cholecalciferol biosynthesis. In terms of biological role, catalyzes the conversion of 25-hydroxyvitamin D3 (25(OH)D3) to 1-alpha,25-dihydroxyvitamin D3 (1alpha,25(OH)(2)D3), and of 24,25-dihydroxyvitamin D3 (24,25(OH)(2)D3) to 1-alpha,24,25-trihydroxyvitamin D3 (1alpha,24,25(OH)(3)D3). Is also active with 25-hydroxy-24-oxo-vitamin D3. Plays an important role in normal bone growth, calcium metabolism, and tissue differentiation. This chain is 25-hydroxyvitamin D-1 alpha hydroxylase, mitochondrial (Cyp27b1), found in Rattus norvegicus (Rat).